A 132-amino-acid polypeptide reads, in one-letter code: Phosphoribosyl-AMP cyclohydrolase (132 aa).

Aspartate 78 contacts Mg(2+). Cysteine 79 lines the Zn(2+) pocket. 2 residues coordinate Mg(2+): aspartate 80 and aspartate 82. Zn(2+)-binding residues include cysteine 96 and cysteine 103.

This sequence belongs to the PRA-CH family. Homodimer. Requires Mg(2+) as cofactor. Zn(2+) serves as cofactor.

The protein localises to the cytoplasm. It catalyses the reaction 1-(5-phospho-beta-D-ribosyl)-5'-AMP + H2O = 1-(5-phospho-beta-D-ribosyl)-5-[(5-phospho-beta-D-ribosylamino)methylideneamino]imidazole-4-carboxamide. It participates in amino-acid biosynthesis; L-histidine biosynthesis; L-histidine from 5-phospho-alpha-D-ribose 1-diphosphate: step 3/9. Its function is as follows. Catalyzes the hydrolysis of the adenine ring of phosphoribosyl-AMP. This Nitrosococcus oceani (strain ATCC 19707 / BCRC 17464 / JCM 30415 / NCIMB 11848 / C-107) protein is Phosphoribosyl-AMP cyclohydrolase.